Consider the following 261-residue polypeptide: Putative cytochrome YdhU (261 aa).

A helical transmembrane segment spans residues 25-45 (FWPVWLIIAGVLLVGMWLVLG). His77 is a binding site for heme b. 3 helical membrane-spanning segments follow: residues 81–101 (ALLF…MVGA), 108–128 (VAVH…FVLI), and 182–202 (VAYV…GLLC). His111 lines the heme b pocket. Heme b contacts are provided by His223 and His237. Residues 224-244 (FALAFISLFFIFGHLYLCTTG) traverse the membrane as a helical segment. His237 is an a menaquinone binding site.

This sequence belongs to the PhsC family. It depends on heme as a cofactor.

It localises to the cell inner membrane. The chain is Putative cytochrome YdhU (ydhU) from Escherichia coli (strain K12).